Here is a 127-residue protein sequence, read N- to C-terminus: uncharacterized protein (127 aa).

A run of 3 helical transmembrane segments spans residues 16-36 (AVIG…CYVI), 59-79 (LVGA…SFLF), and 100-120 (IIGF…GGVI).

Its subcellular location is the cell membrane. This is an uncharacterized protein from Methanocaldococcus jannaschii (strain ATCC 43067 / DSM 2661 / JAL-1 / JCM 10045 / NBRC 100440) (Methanococcus jannaschii).